The following is a 582-amino-acid chain: Leucine-rich repeat protein SHOC-2 (582 aa).

2 stretches are compositionally biased toward basic and acidic residues: residues methionine 1–lysine 29 and lysine 36–serine 57. The tract at residues methionine 1–valine 90 is disordered. Positions glycine 63–phenylalanine 66 match the RVxF motif; important for interaction with PP1c motif. LRR repeat units lie at residues asparagine 101 to leucine 122, glutamine 124 to leucine 145, asparagine 147 to lysine 169, lysine 170 to leucine 191, serine 193 to proline 215, arginine 216 to leucine 237, asparagine 239 to cysteine 260, glutamine 262 to leucine 283, serine 285 to serine 307, alanine 308 to serine 329, lysine 332 to glutamine 353, threonine 356 to arginine 377, valine 380 to threonine 400, serine 403 to leucine 424, serine 426 to arginine 448, lysine 449 to leucine 470, aspartate 472 to threonine 494, asparagine 495 to leucine 516, asparagine 518 to cysteine 540, and lysine 542 to glycine 563.

The protein belongs to the SHOC2 family. As to quaternary structure, component of the SHOC2-MRAS-PP1c (SMP) complex consisting of SHOC2, GTP-bound M-Ras/MRAS and the catalytic subunit of protein phosphatase 1 (either PPP1CA, PPP1CB or PPP1CC). SHOC2 and PP1c preferably bind M-Ras/MRAS, but they also bind K-Ras/KRAS, N-Ras/NRAS and H-Ras/HRAS; these interactions are GTP-dependent and both SHOC2 and PP1c are required to form a stable complex. Interacts with PP1c in the absence of Ras GTPases. Interacts with M-Ras/MRAS and RAF1. Interacts with ERBIN; disrupts the interaction with RAF1 and Ras, preventing the activation of the Ras signaling pathway. Interacts with LZTR1.

The protein localises to the cytoplasm. It is found in the nucleus. In terms of biological role, core component of the SHOC2-MRAS-PP1c (SMP) holophosphatase complex that regulates activation of the MAPK pathway. Acts as a scaffolding protein in the SMP complex. The SMP complex specifically dephosphorylates the inhibitory phosphorylation at 'Ser-259' of RAF1 kinase, 'Ser-365' of BRAF kinase and 'Ser-214' of ARAF kinase, stimulating their kinase activities. The SMP complex enhances the dephosphorylation activity and substrate specificity of PP1c. This Rattus norvegicus (Rat) protein is Leucine-rich repeat protein SHOC-2 (Shoc2).